Consider the following 470-residue polypeptide: V-type ATP synthase beta chain (470 aa).

Belongs to the ATPase alpha/beta chains family.

Functionally, produces ATP from ADP in the presence of a proton gradient across the membrane. The V-type beta chain is a regulatory subunit. This is V-type ATP synthase beta chain from Deinococcus geothermalis (strain DSM 11300 / CIP 105573 / AG-3a).